Reading from the N-terminus, the 843-residue chain is Molybdenum cofactor sulfurase (843 aa).

Lys241 carries the post-translational modification N6-(pyridoxal phosphate)lysine. Residue Cys405 is part of the active site. In terms of domain architecture, MOSC spans 657–836 (QYLRKFVMPG…LMVGDIVIPS (180 aa)).

This sequence belongs to the class-V pyridoxal-phosphate-dependent aminotransferase family. MOCOS subfamily. It depends on pyridoxal 5'-phosphate as a cofactor.

It carries out the reaction Mo-molybdopterin + L-cysteine + AH2 = thio-Mo-molybdopterin + L-alanine + A + H2O. Its function is as follows. Sulfurates the molybdenum cofactor. Sulfation of molybdenum is essential for xanthine dehydrogenase (XDH) and aldehyde oxidase (ADO) enzymes in which molybdenum cofactor is liganded by 1 oxygen and 1 sulfur atom in active form. This Aspergillus fumigatus (strain CBS 144.89 / FGSC A1163 / CEA10) (Neosartorya fumigata) protein is Molybdenum cofactor sulfurase.